A 341-amino-acid chain; its full sequence is Protein pelota homolog (341 aa).

This sequence belongs to the eukaryotic release factor 1 family. Pelota subfamily. In terms of assembly, monomer. The cofactor is a divalent metal cation.

It localises to the cytoplasm. Its function is as follows. May function in recognizing stalled ribosomes, interact with stem-loop structures in stalled mRNA molecules, and effect endonucleolytic cleavage of the mRNA. May play a role in the release non-functional ribosomes and degradation of damaged mRNAs. Has endoribonuclease activity. This chain is Protein pelota homolog, found in Methanoregula boonei (strain DSM 21154 / JCM 14090 / 6A8).